Consider the following 262-residue polypeptide: Type III pantothenate kinase (262 aa).

12–19 provides a ligand contact to ATP; the sequence is DIGNTSIA. Substrate contacts are provided by residues Tyr94 and 109 to 112; that span reads GSDV. The Proton acceptor role is filled by Asp111. Asp132 provides a ligand contact to K(+). Thr135 is an ATP binding site. Thr187 is a substrate binding site.

This sequence belongs to the type III pantothenate kinase family. As to quaternary structure, homodimer. The cofactor is NH4(+). K(+) is required as a cofactor.

It is found in the cytoplasm. It catalyses the reaction (R)-pantothenate + ATP = (R)-4'-phosphopantothenate + ADP + H(+). Its pathway is cofactor biosynthesis; coenzyme A biosynthesis; CoA from (R)-pantothenate: step 1/5. Catalyzes the phosphorylation of pantothenate (Pan), the first step in CoA biosynthesis. This Borrelia garinii subsp. bavariensis (strain ATCC BAA-2496 / DSM 23469 / PBi) (Borreliella bavariensis) protein is Type III pantothenate kinase.